The sequence spans 369 residues: Queuine tRNA-ribosyltransferase (369 aa).

Residue Asp89 is the Proton acceptor of the active site. Substrate is bound by residues 89–93 (DSGGF), Asp142, Gln184, and Gly211. Positions 242 to 248 (GGGSPEL) are RNA binding. Asp261 acts as the Nucleophile in catalysis. Residues 266 to 270 (TRIAR) form an RNA binding; important for wobble base 34 recognition region. Positions 299, 301, 304, and 330 each coordinate Zn(2+).

It belongs to the queuine tRNA-ribosyltransferase family. In terms of assembly, homodimer. Within each dimer, one monomer is responsible for RNA recognition and catalysis, while the other monomer binds to the replacement base PreQ1. Requires Zn(2+) as cofactor.

It carries out the reaction 7-aminomethyl-7-carbaguanine + guanosine(34) in tRNA = 7-aminomethyl-7-carbaguanosine(34) in tRNA + guanine. It participates in tRNA modification; tRNA-queuosine biosynthesis. Functionally, catalyzes the base-exchange of a guanine (G) residue with the queuine precursor 7-aminomethyl-7-deazaguanine (PreQ1) at position 34 (anticodon wobble position) in tRNAs with GU(N) anticodons (tRNA-Asp, -Asn, -His and -Tyr). Catalysis occurs through a double-displacement mechanism. The nucleophile active site attacks the C1' of nucleotide 34 to detach the guanine base from the RNA, forming a covalent enzyme-RNA intermediate. The proton acceptor active site deprotonates the incoming PreQ1, allowing a nucleophilic attack on the C1' of the ribose to form the product. After dissociation, two additional enzymatic reactions on the tRNA convert PreQ1 to queuine (Q), resulting in the hypermodified nucleoside queuosine (7-(((4,5-cis-dihydroxy-2-cyclopenten-1-yl)amino)methyl)-7-deazaguanosine). This Thermotoga neapolitana (strain ATCC 49049 / DSM 4359 / NBRC 107923 / NS-E) protein is Queuine tRNA-ribosyltransferase.